The chain runs to 110 residues: Integration host factor subunit alpha (110 aa).

It belongs to the bacterial histone-like protein family. As to quaternary structure, heterodimer of an alpha and a beta chain.

Its function is as follows. This protein is one of the two subunits of integration host factor, a specific DNA-binding protein that functions in genetic recombination as well as in transcriptional and translational control. The polypeptide is Integration host factor subunit alpha (Bdellovibrio bacteriovorus (strain ATCC 15356 / DSM 50701 / NCIMB 9529 / HD100)).